The primary structure comprises 418 residues: Zinc finger protein 566 (418 aa).

Residues 6–77 enclose the KRAB domain; the sequence is VMFSDVSVDF…DRELTRGQWP (72 aa). The C2H2-type 1; degenerate zinc finger occupies 169–193; it reads KFCASKEYRKTFRHGSQFATHEIIH. 7 C2H2-type zinc fingers span residues 199-221, 227-249, 255-277, 283-305, 311-333, 339-361, and 367-389; these read YECK…QKIH, FECK…HRIH, YECK…QRIH, and YECK…HRIH. Glycyl lysine isopeptide (Lys-Gly) (interchain with G-Cter in SUMO2) cross-links involve residues Lys314 and Lys328.

This sequence belongs to the krueppel C2H2-type zinc-finger protein family.

The protein localises to the nucleus. May be involved in transcriptional regulation. This chain is Zinc finger protein 566 (ZNF566), found in Pan troglodytes (Chimpanzee).